A 390-amino-acid polypeptide reads, in one-letter code: Chorismate synthase 2 (390 aa).

Positions 39 and 45 each coordinate NADP(+). FMN is bound by residues 132 to 134 (RSS), 253 to 254 (NA), Gly-298, 313 to 317 (KPIPT), and Arg-339.

It belongs to the chorismate synthase family. Homotetramer. Requires FMNH2 as cofactor.

The catalysed reaction is 5-O-(1-carboxyvinyl)-3-phosphoshikimate = chorismate + phosphate. It participates in metabolic intermediate biosynthesis; chorismate biosynthesis; chorismate from D-erythrose 4-phosphate and phosphoenolpyruvate: step 7/7. Catalyzes the anti-1,4-elimination of the C-3 phosphate and the C-6 proR hydrogen from 5-enolpyruvylshikimate-3-phosphate (EPSP) to yield chorismate, which is the branch point compound that serves as the starting substrate for the three terminal pathways of aromatic amino acid biosynthesis. This reaction introduces a second double bond into the aromatic ring system. This is Chorismate synthase 2 from Bacillus cereus (strain ATCC 10987 / NRS 248).